Consider the following 404-residue polypeptide: Cysteine desulfurase IscS (404 aa).

Pyridoxal 5'-phosphate contacts are provided by residues 75–76 (AT), Asn155, Gln183, and 203–205 (SAH). Lys206 bears the N6-(pyridoxal phosphate)lysine mark. Thr243 lines the pyridoxal 5'-phosphate pocket. The active-site Cysteine persulfide intermediate is the Cys328. Cys328 is a binding site for [2Fe-2S] cluster.

The protein belongs to the class-V pyridoxal-phosphate-dependent aminotransferase family. NifS/IscS subfamily. Homodimer. Forms a heterotetramer with IscU, interacts with other sulfur acceptors. Pyridoxal 5'-phosphate serves as cofactor.

Its subcellular location is the cytoplasm. The enzyme catalyses (sulfur carrier)-H + L-cysteine = (sulfur carrier)-SH + L-alanine. The protein operates within cofactor biosynthesis; iron-sulfur cluster biosynthesis. In terms of biological role, master enzyme that delivers sulfur to a number of partners involved in Fe-S cluster assembly, tRNA modification or cofactor biosynthesis. Catalyzes the removal of elemental sulfur atoms from cysteine to produce alanine. Functions as a sulfur delivery protein for Fe-S cluster synthesis onto IscU, an Fe-S scaffold assembly protein, as well as other S acceptor proteins. The polypeptide is Cysteine desulfurase IscS (Pseudomonas fluorescens (strain Pf0-1)).